The chain runs to 92 residues: MGKRFSESAAKKAAGLARKRDQAHAKQRAQMEQLEAEEASKWEQGSRKENAKKLEEEQKRQEKARAKKERDALLTAEEEQLGKGGKGKRKMK.

2 stretches are compositionally biased toward basic and acidic residues: residues 1–10 and 38–72; these read MGKRFSESAA and EASK…ERDA. The disordered stretch occupies residues 1 to 92; sequence MGKRFSESAA…KGGKGKRKMK (92 aa). A coiled-coil region spans residues 17 to 80; it reads ARKRDQAHAK…DALLTAEEEQ (64 aa).

This sequence belongs to the CCDC124 family. Associates with translationally inactive ribosomes in the nonrotated state. LSO2 bridges the decoding sites of the small with the GTPase activating center (GAC) of the large subunit. This position allows accommodation of the DOM34-dependent ribosome recycling system, which splits LSO2-containing ribosomes.

The protein resides in the nucleus. The protein localises to the cytoplasm. Functionally, ribosome-binding protein involved in ribosome hibernation by associating with translationally inactive ribosomes. Required for translational recovery after starvation from stationary phase. May facilitate rapid translation reactivation by stabilizing the recycling-competent state of inactive ribosomes. The chain is Protein LSO2 from Saccharomyces cerevisiae (strain ATCC 204508 / S288c) (Baker's yeast).